A 382-amino-acid chain; its full sequence is Anthranilate O-methyltransferase 1 (382 aa).

Tyrosine 20 serves as a coordination point for S-adenosyl-L-homocysteine. Anthranilate is bound at residue glutamine 27. The S-adenosyl-L-homocysteine site is built by cysteine 61, asparagine 66, aspartate 102, leucine 103, serine 146, and tyrosine 147. Residue tryptophan 168 coordinates anthranilate. Mg(2+)-binding residues include glutamate 268 and phenylalanine 270.

Belongs to the methyltransferase superfamily. Type-7 methyltransferase family. SABATH subfamily.

It catalyses the reaction anthranilate + S-adenosyl-L-methionine = O-methyl anthranilate + S-adenosyl-L-homocysteine. Its function is as follows. Methyltransferase involved in the biosynthesis of methyl anthranilate in response to stresses. Utilizes anthranilic acid as substrate, but not salicylic acid. Produces exclusively the O-methyl ester. This chain is Anthranilate O-methyltransferase 1 (AAMT1), found in Zea mays (Maize).